Reading from the N-terminus, the 297-residue chain is Band 7 protein AAEL010189 (297 aa).

The span at 1-13 shows a compositional bias: polar residues; sequence MGVVESITNSTKP. The segment at 1-30 is disordered; the sequence is MGVVESITNSTKPGVTKKSSPEAEDDSNGE. A helical transmembrane segment spans residues 37 to 57; it reads ILIFLSWVLVVLTMPFSLLVC.

It belongs to the band 7/mec-2 family.

The protein localises to the membrane. This is Band 7 protein AAEL010189 from Aedes aegypti (Yellowfever mosquito).